The primary structure comprises 148 residues: Large ribosomal subunit protein uL15B (148 aa).

Composition is skewed to basic residues over residues 1 to 13 and 21 to 31; these read MPTHTSKTRKLRG and RIGKHRKHPGG. The disordered stretch occupies residues 1 to 38; it reads MPTHTSKTRKLRGHVSAGHGRIGKHRKHPGGRGKAGGL. Position 108 is a phosphotyrosine (tyrosine 108).

Belongs to the universal ribosomal protein uL15 family. As to quaternary structure, component of the large ribosomal subunit (LSU). Mature yeast ribosomes consist of a small (40S) and a large (60S) subunit. The 40S small subunit contains 1 molecule of ribosomal RNA (18S rRNA) and at least 33 different proteins. The large 60S subunit contains 3 rRNA molecules (25S, 5.8S and 5S rRNA) and at least 46 different proteins.

Its subcellular location is the cytoplasm. The protein resides in the nucleus. It localises to the nucleolus. Functionally, component of the ribosome, a large ribonucleoprotein complex responsible for the synthesis of proteins in the cell. The small ribosomal subunit (SSU) binds messenger RNAs (mRNAs) and translates the encoded message by selecting cognate aminoacyl-transfer RNA (tRNA) molecules. The large subunit (LSU) contains the ribosomal catalytic site termed the peptidyl transferase center (PTC), which catalyzes the formation of peptide bonds, thereby polymerizing the amino acids delivered by tRNAs into a polypeptide chain. The nascent polypeptides leave the ribosome through a tunnel in the LSU and interact with protein factors that function in enzymatic processing, targeting, and the membrane insertion of nascent chains at the exit of the ribosomal tunnel. The polypeptide is Large ribosomal subunit protein uL15B (rpl2801) (Schizosaccharomyces pombe (strain 972 / ATCC 24843) (Fission yeast)).